The chain runs to 232 residues: MTNYREIAWQGLWKNNPGLVQRLGLCPLLAVTTTLTNALGLGIATMLVLIGSNVLISLVRDYVPKEIRIPVFVMIIAALVTAVQLLVNAYAYGLYMSLGIFLPLIVTNCIIIGRAEAFASRNNAFSSAFDGLMMGLGFTLVLVLLGATREILGQGTLFDGADQLLGPWAKALTFQVWQVDTSFLLAMLPPGAFIVMGLLIALKNVIDKKLRERQPETAVQPSVARARITKVS.

The next 5 membrane-spanning stretches (helical) occupy residues 39 to 59, 69 to 89, 93 to 113, 128 to 148, and 182 to 202; these read LGLG…ISLV, IPVF…LVNA, GLYM…IIIG, AFDG…LGAT, and SFLL…LIAL.

This sequence belongs to the NqrDE/RnfAE family. As to quaternary structure, the complex is composed of six subunits: RnfA, RnfB, RnfC, RnfD, RnfE and RnfG.

It is found in the cell inner membrane. Its function is as follows. Part of a membrane-bound complex that couples electron transfer with translocation of ions across the membrane. The protein is Ion-translocating oxidoreductase complex subunit E of Shewanella oneidensis (strain ATCC 700550 / JCM 31522 / CIP 106686 / LMG 19005 / NCIMB 14063 / MR-1).